Reading from the N-terminus, the 438-residue chain is uncharacterized protein (438 aa).

Lys-273 carries the N6-(pyridoxal phosphate)lysine modification.

This sequence belongs to the class-III pyridoxal-phosphate-dependent aminotransferase family. It depends on pyridoxal 5'-phosphate as a cofactor.

The protein resides in the mitochondrion. This is an uncharacterized protein from Schizosaccharomyces pombe (strain 972 / ATCC 24843) (Fission yeast).